A 279-amino-acid chain; its full sequence is Putative phosphoenolpyruvate synthase regulatory protein (279 aa).

159–166 (GVSRSGKT) contributes to the ADP binding site.

Belongs to the pyruvate, phosphate/water dikinase regulatory protein family. PSRP subfamily.

The enzyme catalyses [pyruvate, water dikinase] + ADP = [pyruvate, water dikinase]-phosphate + AMP + H(+). It carries out the reaction [pyruvate, water dikinase]-phosphate + phosphate + H(+) = [pyruvate, water dikinase] + diphosphate. Its function is as follows. Bifunctional serine/threonine kinase and phosphorylase involved in the regulation of the phosphoenolpyruvate synthase (PEPS) by catalyzing its phosphorylation/dephosphorylation. In Ralstonia nicotianae (strain ATCC BAA-1114 / GMI1000) (Ralstonia solanacearum), this protein is Putative phosphoenolpyruvate synthase regulatory protein.